Here is a 574-residue protein sequence, read N- to C-terminus: K(+)/H(+) antiporter NhaP2 (574 aa).

13 helical membrane-spanning segments follow: residues 6–26 (INSF…LSPV), 34–54 (ILLI…GGIL), 58–78 (YSTA…DGGM), 87–107 (VALW…TSIT), 109–129 (VMAA…GAIV), 173–193 (IAIL…ISFI), 196–216 (FGLG…LVNL), 219–239 (LAEG…YAAS), 242–262 (LGGS…NKPT), 271–291 (VLDG…GLLL), 299–319 (IWLP…PLAV), 335–355 (WFIS…VFPM), and 359–379 (LPGA…SLLV). The region spanning 405 to 486 (SGVEIYPSSE…LEALSNLFSQ (82 aa)) is the RCK C-terminal domain.

Belongs to the monovalent cation:proton antiporter 1 (CPA1) transporter (TC 2.A.36) family. NhaP2 subfamily.

Its subcellular location is the cell inner membrane. It catalyses the reaction K(+)(in) + H(+)(out) = K(+)(out) + H(+)(in). K(+)/H(+) antiporter that extrudes potassium in exchange for external protons and maintains the internal concentration of potassium under toxic levels. The chain is K(+)/H(+) antiporter NhaP2 from Shewanella sp. (strain MR-7).